Reading from the N-terminus, the 151-residue chain is Ubiquitin-conjugating enzyme E2 2 (151 aa).

Residues 1–26 (MSTSARRRLMRDFKRMQTDPPAGVSA) are disordered. Residues 4–150 (SARRRLMRDF…VRETVEKSWE (147 aa)) enclose the UBC core domain. Cysteine 88 (glycyl thioester intermediate) is an active-site residue.

Belongs to the ubiquitin-conjugating enzyme family.

The protein localises to the cytoplasm. It is found in the nucleus. It catalyses the reaction S-ubiquitinyl-[E1 ubiquitin-activating enzyme]-L-cysteine + [E2 ubiquitin-conjugating enzyme]-L-cysteine = [E1 ubiquitin-activating enzyme]-L-cysteine + S-ubiquitinyl-[E2 ubiquitin-conjugating enzyme]-L-cysteine.. Its pathway is protein modification; protein ubiquitination. Catalyzes the covalent attachment of ubiquitin to other proteins. Plays a role in transcription regulation by catalyzing the monoubiquitination of histone H2B to form H2BK123ub1. H2BK123ub1 gives a specific tag for epigenetic transcriptional activation and is also a prerequisite for H3K4me and H3K79me formation. Also involved in postreplication repair of UV-damaged DNA, in N-end rule-dependent protein degradation and in sporulation. The protein is Ubiquitin-conjugating enzyme E2 2 (ubc2) of Aspergillus fumigatus (strain ATCC MYA-4609 / CBS 101355 / FGSC A1100 / Af293) (Neosartorya fumigata).